A 600-amino-acid chain; its full sequence is MEAIKTFSPKFGFQISLSPRTHLTPVRFPPTACPVKPANLVRLKATRALIRDPQESNRKFQKFPPSEWTNRFDSVSVDASEMDALRKEIDKIIPNVKKELMSSQGIESTKKKILMVYLLVSLGLAYHFEDEIEECLKEGFETIEEMMAGEDNLYTISIIFLVLRTYGHHMSSDIFQKFKGNDGNFKGCISGDAKGLLALYEAAQLRTTTEYIMEEALSFTSSNLELLAADGRCPPHLSKHIRNALGLSQHKQMEVLVAVEYISFYEQEKDHDKILLKFAKLNFKLMQLHYLEELKVVTKWYKEHDFASNLPPYFKYVIVENHFFAITMYFEPKFSQKRIMLAKYFTVLVLLDDTCDRYASLSEAESLTNSLERWAPDDAMDKQPHYLKFVFKFIMGCFEEFERELASEGRSYSVKATLEEFKTIVKANFDFAKLAHTGHVPSFKEYMEVGEVEVGVCATLAGNLMCIGHIGDEGVYEWLKSRPKFLKAASTYGRLMNDIAGFEDDMKREYVITGVNTYMKQYGLTKMEAIRELQNLVEYNHTIMNEEFLKTTDLPRQIRKQVINVARSLNVSYTEGEGFTHTKGKVDEYITSLFITPIRI.

Mg(2+)-binding residues include aspartate 352, aspartate 356, asparagine 497, and aspartate 505. The short motif at aspartate 352–aspartate 356 is the DDXXD motif element.

Belongs to the terpene synthase family. Tpsa subfamily. The cofactor is Mg(2+). Requires Mn(2+) as cofactor. As to expression, stele, and tips of primary and secondary root.

It localises to the plastid. It carries out the reaction (2E,6E,10E)-geranylgeranyl diphosphate = rhizathalene A + diphosphate. Its pathway is secondary metabolite biosynthesis; terpenoid biosynthesis. In terms of biological role, catalyzes the synthesis of the semivolatile diterpene rhizatalene A. In Arabidopsis thaliana (Mouse-ear cress), this protein is Terpenoid synthase 8 (TPS08).